Here is a 296-residue protein sequence, read N- to C-terminus: MKPPSFDYVVADSVEHALRLLADGGDDAKIIAGGQSLVPLLNFRMSRPSLLVDINRVPGLANIRKSDQTIAIGALTRHAKLTTSKTISQNLPILSEAAAWIAHPQIRNRGTIGGSLAHADAAAELPVVLLALDAYVTAQSLQGERKIPLKELLVSHFVSSILPGELIVEVNVPQLPHGSGAAFDEFSRRHGDYAIGGAASIVTLDEQGKCSRARITVLGGGSTAIRCQEAENILIDSTLSSHDIAAAAHAAVQGLDPVPTVHGSAQYRAQVIRTMVERTLAKALHRARPTKESMDH.

An FAD-binding PCMH-type domain is found at 1–177 (MKPPSFDYVV…VEVNVPQLPH (177 aa)). FAD is bound by residues 30 to 37 (IIAGGQSL), 111 to 115 (TIGGS), and Glu124.

As to quaternary structure, heterohexamer of 2 alpha (kdhA), 2 beta (kdhB) and 2 gamma (kdhC) subunit. Dimer of heterotrimers. The cofactor is FAD.

The catalysed reaction is 6-hydroxypseudooxynicotine + A + H2O = 2,6-dihydroxypseudooxynicotine + AH2. Its pathway is alkaloid degradation; nicotine degradation. In terms of biological role, molybdo-flavoprotein enzyme complex involved in nicotine degradation. The subunit gamma (large subunit) contains the substrate-binding sites, the subunit alpha (medium subunit) binds FAD and the subunit beta (small subunit) has a 2Fe-2S ferredoxin-type domain which binds 2 2Fe-2S clusters. This Paenarthrobacter nicotinovorans (Arthrobacter nicotinovorans) protein is 6-hydroxypseudooxynicotine dehydrogenase complex subunit alpha (kdhA).